Reading from the N-terminus, the 73-residue chain is MCRIFIVLLVVAALAIIIEGQLTFSSGWGNGKRSISSEQINDDCNPEEAIFQIYKLIVSEGERIRACQRDGKM.

The signal sequence occupies residues 1–20 (MCRIFIVLLVVAALAIIIEG). Pyrrolidone carboxylic acid is present on Q21. N30 carries the post-translational modification Asparagine amide. The propeptide occupies 34-73 (SISSEQINDDCNPEEAIFQIYKLIVSEGERIRACQRDGKM).

As to expression, expressed in corpora cardiaca (CC), corpora allata (CA) and gnathal ganglion (GNG) (at protein level). Expression in CC and CA detected in all animals, expression in GNG detected in few animals (at protein level). Not expressed in antennal lobe (AL) (at protein level).

It is found in the secreted. In terms of biological role, this hormone, released from cells in the corpora cardiaca, causes release of diglycerides from the fat body and stimulation of muscles to use these diglycerides as an energy source during energy-demanding processes. This Agrotis ipsilon (Black cutworm moth) protein is Adipokinetic prohormone type 2.